We begin with the raw amino-acid sequence, 277 residues long: Phosphate import ATP-binding protein PstB 2 (277 aa).

The ABC transporter domain maps to 31-272; that stretch reads IEVPGLNLFY…PAKKQTEDYI (242 aa). Residue 63-70 coordinates ATP; it reads GPSGCGKS.

The protein belongs to the ABC transporter superfamily. Phosphate importer (TC 3.A.1.7) family. As to quaternary structure, the complex is composed of two ATP-binding proteins (PstB), two transmembrane proteins (PstC and PstA) and a solute-binding protein (PstS).

Its subcellular location is the cell inner membrane. It carries out the reaction phosphate(out) + ATP + H2O = ADP + 2 phosphate(in) + H(+). Part of the ABC transporter complex PstSACB involved in phosphate import. Responsible for energy coupling to the transport system. The chain is Phosphate import ATP-binding protein PstB 2 from Pseudomonas syringae pv. syringae (strain B728a).